The following is a 354-amino-acid chain: DNA replication and repair protein RecF (354 aa).

30–37 (GDNGSGKT) contributes to the ATP binding site.

This sequence belongs to the RecF family.

Its subcellular location is the cytoplasm. The RecF protein is involved in DNA metabolism; it is required for DNA replication and normal SOS inducibility. RecF binds preferentially to single-stranded, linear DNA. It also seems to bind ATP. The polypeptide is DNA replication and repair protein RecF (Idiomarina loihiensis (strain ATCC BAA-735 / DSM 15497 / L2-TR)).